Reading from the N-terminus, the 1838-residue chain is Collagen alpha-1(V) chain (1838 aa).

Positions 1-36 are cleaved as a signal peptide; sequence MDVHTRWKAARPGALLLSSPLLLFLLLLWAPPSSRA. Positions 72–244 constitute a Laminin G-like domain; it reads DVAYRVSKDA…DYCEHYSPDC (173 aa). The interval 231-443 is nonhelical region; it reads RAAYDYCEHY…MPANQDTIFE (213 aa). 5 positions are modified to sulfotyrosine: Tyr234, Tyr236, Tyr240, Tyr262, and Tyr263. 2 disordered regions span residues 242–545 and 559–1574; these read PDCD…QESQ and GPAG…EVIQ. Positions 258-268 are enriched in acidic residues; it reads NPDEYYPEGEG. 4 stretches are compositionally biased toward low complexity: residues 335–345, 374–387, 413–428, and 460–469; these read DYDYVPPDDYY, VPTS…TSNP, YDPY…VSPS, and IIEPGMLIEG. An interrupted collagenous region region spans residues 444–558; it reads GIGGPRGEKG…ILQQARLALR (115 aa). Residues 470–485 show a composition bias toward pro residues; the sequence is PPGPEGPAGLPGPPGT. Composition is skewed to low complexity over residues 506 to 523 and 559 to 570; these read LPGA…LMLP and GPAGPMGLTGRP. Residues 559–1570 are triple-helical region; the sequence is GPAGPMGLTG…GLPGPPGPPG (1012 aa). 4-hydroxyproline occurs at positions 570, 576, and 621. Lys627 is subject to 5-hydroxylysine. Pro639 is subject to 4-hydroxyproline. The residue at position 642 (Lys642) is a 5-hydroxylysine. A 4-hydroxyproline mark is found at Pro648, Pro654, Pro657, Pro675, and Pro678. Residues 671–686 are compositionally biased toward low complexity; sequence PRGLPGEPGPRGLLGP. 3-hydroxyproline is present on residues Pro680 and Pro686. Over residues 687–696 the composition is skewed to pro residues; sequence KGPPGPPGPP. 4-hydroxyproline is present on residues Pro690, Pro696, and Pro705. Position 708 is a 5-hydroxylysine (Lys708). 4-hydroxyproline is present on residues Pro717, Pro720, Pro726, and Pro732. Residues 722–741 are compositionally biased toward low complexity; that stretch reads QQGNPGAQGLPGPQGAIGPP. The residue at position 744 (Lys744) is a 5-hydroxylysine. Residues 747 to 756 are compositionally biased toward low complexity; the sequence is LGKPGLPGMP. 5 positions are modified to 4-hydroxyproline: Pro750, Pro756, Pro762, Pro765, and Pro771. 5-hydroxylysine is present on Lys774. A 4-hydroxyproline mark is found at Pro780 and Pro789. 5-hydroxylysine is present on residues Lys795, Lys804, Lys807, and Lys810. 4-hydroxyproline is present on Pro816. Residue Lys819 is modified to 5-hydroxylysine. Residue Pro834 is modified to 4-hydroxyproline. The span at 837 to 846 shows a compositional bias: basic and acidic residues; the sequence is RGEDGPEGPK. Residues Lys846 and Lys864 each carry the 5-hydroxylysine modification. 4-hydroxyproline is present on residues Pro870, Pro873, and Pro876. Lys882 carries the 5-hydroxylysine modification. 4-hydroxyproline is present on residues Pro888 and Pro891. Lys897 bears the 5-hydroxylysine mark. 4-hydroxyproline is present on residues Pro903 and Pro906. Low complexity predominate over residues 908-917; that stretch reads PRGQRGPTGP. 2 positions are modified to 4-hydroxyproline: Pro930 and Pro945. 2 stretches are compositionally biased toward low complexity: residues 971–990 and 999–1011; these read KDGL…QGKT and VGPQ…TGPM. A 4-hydroxyproline mark is found at Pro1017, Pro1020, Pro1023, and Pro1029. Over residues 1088–1104 the composition is skewed to low complexity; the sequence is SPGERGPAGAAGPIGIP. Positions 1106 to 1115 are enriched in pro residues; sequence RPGPQGPPGP. 4-hydroxyproline occurs at positions 1221 and 1224. Residues 1259–1268 are compositionally biased toward low complexity; it reads PSGAPGADGP. Positions 1294–1303 are enriched in gly residues; it reads GLPGEGGPLG. 2 stretches are compositionally biased toward pro residues: residues 1380–1398 and 1454–1469; these read TGEP…PGPA and SPGP…PPGL. Pro1467 and Pro1470 each carry 4-hydroxyproline. Positions 1485–1494 are enriched in low complexity; the sequence is PGLIGLIGPP. A compositionally biased stretch (pro residues) spans 1526-1541; the sequence is PLGPPGPPGLPGPPGP. Residues 1542–1554 show a composition bias toward low complexity; the sequence is KGAKGSSGPTGPK. A nonhelical region region spans residues 1571 to 1605; that stretch reads EVIQPLPIQASRTRRNIDASQLLDDGAGESYVDYA. Tyr1601 and Tyr1604 each carry sulfotyrosine. The region spanning 1609–1837 is the Fibrillar collagen NC1 domain; sequence EEIFGSLNSL…GFEVGPACFL (229 aa).

This sequence belongs to the fibrillar collagen family. Trimers of two alpha 1(V) and one alpha 2(V) chains in most tissues and trimers of one alpha 1(V), one alpha 2(V), and one alpha 3(V) chains in placenta. Interacts with CSPG4. Hydroxylation on proline residues within the sequence motif, GXPG, is most likely to be 4-hydroxy as this fits the requirement for 4-hydroxylation in vertebrates. Post-translationally, sulfated on 40% of tyrosines. In terms of tissue distribution, widely expressed. Isoform 2 is more highly expressed in liver, kidney and lung.

The protein localises to the secreted. It localises to the extracellular space. Its subcellular location is the extracellular matrix. Type V collagen is a member of group I collagen (fibrillar forming collagen). It is a minor connective tissue component of nearly ubiquitous distribution. Type V collagen binds to DNA, heparan sulfate, thrombospondin, heparin, and insulin. Transcriptionally activated by CEBPZ, which recognizes a CCAAT-like motif, CAAAT in the COL5A1 promoter. This chain is Collagen alpha-1(V) chain (Col5a1), found in Mus musculus (Mouse).